The following is a 288-amino-acid chain: ATP synthase gamma chain (288 aa).

The protein belongs to the ATPase gamma chain family. F-type ATPases have 2 components, CF(1) - the catalytic core - and CF(0) - the membrane proton channel. CF(1) has five subunits: alpha(3), beta(3), gamma(1), delta(1), epsilon(1). CF(0) has three main subunits: a, b and c.

The protein localises to the cell inner membrane. Produces ATP from ADP in the presence of a proton gradient across the membrane. The gamma chain is believed to be important in regulating ATPase activity and the flow of protons through the CF(0) complex. The polypeptide is ATP synthase gamma chain (Actinobacillus pleuropneumoniae serotype 5b (strain L20)).